The chain runs to 198 residues: Probable GTP-binding protein EngB (198 aa).

The region spanning 27-198 (DLPEVALAGR…ESWDTILSEL (172 aa)) is the EngB-type G domain. Residues 35-42 (GRSNVGKS), 62-66 (GKTQL), 80-83 (DVPG), 147-150 (TKAD), and 179-181 (FSS) each bind GTP. Residues serine 42 and threonine 64 each contribute to the Mg(2+) site.

Belongs to the TRAFAC class TrmE-Era-EngA-EngB-Septin-like GTPase superfamily. EngB GTPase family. Mg(2+) serves as cofactor.

Functionally, necessary for normal cell division and for the maintenance of normal septation. The sequence is that of Probable GTP-binding protein EngB from Streptococcus agalactiae serotype Ia (strain ATCC 27591 / A909 / CDC SS700).